A 792-amino-acid polypeptide reads, in one-letter code: Phenylalanine--tRNA ligase beta subunit (792 aa).

One can recognise a tRNA-binding domain in the interval 40–156 (FPRTENLIVG…AKLNDIDPLK (117 aa)). Positions 404-472 (LKDNLIDFDS…KKINVNNLEL (69 aa)) constitute a B5 domain. Residues Asp-450, Asp-456, Glu-459, and Glu-460 each coordinate Mg(2+).

Belongs to the phenylalanyl-tRNA synthetase beta subunit family. Type 1 subfamily. As to quaternary structure, tetramer of two alpha and two beta subunits. Mg(2+) serves as cofactor.

It localises to the cytoplasm. It catalyses the reaction tRNA(Phe) + L-phenylalanine + ATP = L-phenylalanyl-tRNA(Phe) + AMP + diphosphate + H(+). In Malacoplasma penetrans (strain HF-2) (Mycoplasma penetrans), this protein is Phenylalanine--tRNA ligase beta subunit.